The chain runs to 383 residues: RNA-binding motif, single-stranded-interacting protein 2 (383 aa).

At Met1 the chain carries N-acetylmethionine. Residues 28–56 (QMAPPSPRNSTPNSSGGGGGGSGGNDQLS) form a disordered region. Positions 42–51 (SGGGGGGSGG) are enriched in gly residues. RRM domains follow at residues 58-131 (TNLY…MAKQ) and 137-222 (TNLY…FADG). Ser108 bears the Phosphoserine mark. Ser287 carries the phosphoserine modification. The interval 352–383 (SSVSAEESNGQQNQLAVEPPSDHGVYPFQFSK) is disordered.

It localises to the nucleus. In Mus musculus (Mouse), this protein is RNA-binding motif, single-stranded-interacting protein 2 (Rbms2).